The sequence spans 295 residues: uncharacterized protein (295 aa).

This is an uncharacterized protein from Acanthamoeba polyphaga (Amoeba).